A 202-amino-acid chain; its full sequence is Glycerol-3-phosphate acyltransferase (202 aa).

The next 4 helical transmembrane spans lie at 2–22 (ANLLFALAAYLIGSVSFAVVV), 82–102 (DTGLAMVALAVFLGHLFPVFH), 119–139 (AIDPILGLGTLATWLIIAFFF), and 158–178 (VLMNGVDVMAGAIFVISVLLI).

It belongs to the PlsY family. As to quaternary structure, probably interacts with PlsX.

It localises to the cell inner membrane. The enzyme catalyses an acyl phosphate + sn-glycerol 3-phosphate = a 1-acyl-sn-glycero-3-phosphate + phosphate. Its pathway is lipid metabolism; phospholipid metabolism. Catalyzes the transfer of an acyl group from acyl-phosphate (acyl-PO(4)) to glycerol-3-phosphate (G3P) to form lysophosphatidic acid (LPA). This enzyme utilizes acyl-phosphate as fatty acyl donor, but not acyl-CoA or acyl-ACP. The polypeptide is Glycerol-3-phosphate acyltransferase (Cupriavidus taiwanensis (strain DSM 17343 / BCRC 17206 / CCUG 44338 / CIP 107171 / LMG 19424 / R1) (Ralstonia taiwanensis (strain LMG 19424))).